A 124-amino-acid chain; its full sequence is MGTSSVLLMIASSLILLEVVMTSSTEVSKSKELENLVEVLRCFKDLKESGQRTYVTYIGSQMRLFDDRGREVSCDAEKQQEIRQRSDRRCIFSPIHCLFDRRLQTAKLLRSGTTKRLFGERRRR.

A signal peptide spans 1-22; sequence MGTSSVLLMIASSLILLEVVMT.

This is an uncharacterized protein from Caenorhabditis elegans.